The chain runs to 1023 residues: Solute carrier family 12 member 3 (1023 aa).

The Cytoplasmic portion of the chain corresponds to 1–134 (MELPGDGVHL…EPPPEPPRFG (134 aa)). The disordered stretch occupies residues 91–131 (DPEQDDFKPPMYEETAGERMGGGDSSEEEEEEHKEPPPEPP). A discontinuously helical transmembrane segment spans residues 135–164 (WVQGVMIRCMLNIWGVILYLRLPWITAQAG). Residues leucine 145 and tryptophan 148 each contribute to the Na(+) site. A helical transmembrane segment spans residues 165–186 (IGLTWVIILLSSFITGITGLST). The Cytoplasmic segment spans residues 187–217 (SAIATNGKVKGGGTYFLISRSLGPELGGSIG). Residues 218 to 240 (LIFAFANAVAVAMHTVGFAETVT) traverse the membrane as a helical segment. Topologically, residues 241–252 (DLMRENGVVMVD) are extracellular. Helical transmembrane passes span 253–277 (PIND…AGME) and 278–300 (WESK…YIVG). The Extracellular portion of the chain corresponds to 301-335 (TIIPASPQKQAKGFFSYKAEIFAANFVPGWRGKEG). Residues 336-357 (SFFGMFSIFFPSATGILAGANI) form a discontinuously helical membrane-spanning segment. Positions 350, 351, and 352 each coordinate chloride. At 358–368 (SGDLKDPTVAI) the chain is on the cytoplasmic side. The chain crosses the membrane as a helical span at residues 369 to 390 (PRGTLMAIFWTTISYLIISATI). Over 391–452 (GACVVRDASG…YQSMSLVSAF (62 aa)) the chain is Extracellular. N-linked (GlcNAc...) asparagine glycans are attached at residues asparagine 403 and asparagine 414. Cystine bridges form between cysteine 415/cysteine 420 and cysteine 429/cysteine 435. A glycan (N-linked (GlcNAc...) asparagine) is linked at asparagine 432. The helical transmembrane segment at 453–476 (APLISAGIFGATLSSALACLVSAP) threads the bilayer. 3 residues coordinate Na(+): alanine 463, serine 466, and serine 467. The Cytoplasmic portion of the chain corresponds to 477 to 506 (KVFQCLCKDQLYPLIGFFGKGYGKNAEPLR). A helical transmembrane segment spans residues 507 to 521 (AYLLTYVIAVCFVLI). The Extracellular portion of the chain corresponds to 522–526 (AELNT). Residues 527–543 (IAPIISNFFLCSYALIN) form a helical membrane-spanning segment. Residue tyrosine 539 participates in chloride binding. The Cytoplasmic segment spans residues 544–566 (FSCFHASVTNSPGWRPSFRFYSK). 2 helical membrane-spanning segments follow: residues 567-586 (WLSL…LTWW) and 587-598 (AALIAFGVVFFL). The Cytoplasmic portion of the chain corresponds to 599-1023 (LGYTLYKKPA…QENVLTFYCQ (425 aa)). Residues 614–629 (SVQASSYSMALNQCVG) are scissor helix. The ATP site is built by leucine 647, arginine 654, valine 676, glycine 733, and leucine 772.

It belongs to the SLC12A transporter family. In terms of assembly, homodimer; adopts a domain-swap conformation at the scissor helices connecting the transmembrane domain and C-terminal domain. Expressed in urinary bladder, intestine, ovary, skeletal muscle, eye, brain, and kidney.

Its subcellular location is the cell membrane. The catalysed reaction is chloride(out) + Na(+)(out) = chloride(in) + Na(+)(in). Its activity is regulated as follows. Inhibited by thiazide-type diuretics including polythiazide, metolazone, cyclothiazide, hydrochlorothiazide and chlorthalidone. Thiazide drugs, specifically inhibit SLC12A3/NCC transporter activity by competing with chloride for binding. Its function is as follows. Electroneutral sodium and chloride ion cotransporter, with a coupling ratio 1 Na(+):1 Cl(-). Mediates sodium and chloride reabsorption. In Pseudopleuronectes americanus (Winter flounder), this protein is Solute carrier family 12 member 3 (slc12a3).